The sequence spans 480 residues: Siroheme synthase 1 (480 aa).

The segment at 1–203 (MNYLPIFADL…GQLEQAEGEL (203 aa)) is precorrin-2 dehydrogenase /sirohydrochlorin ferrochelatase. NAD(+) contacts are provided by residues 22-23 (EV) and 43-44 (LA). Residue serine 128 is modified to Phosphoserine. Residues 222 to 480 (GEVALVGAGP…DSRPAVVNLA (259 aa)) are uroporphyrinogen-III C-methyltransferase. Position 231 (proline 231) interacts with S-adenosyl-L-methionine. Residue aspartate 254 is the Proton acceptor of the active site. The active-site Proton donor is the lysine 276. S-adenosyl-L-methionine-binding positions include 307-309 (GGD), isoleucine 312, 337-338 (TA), methionine 389, and glycine 418.

The protein in the N-terminal section; belongs to the precorrin-2 dehydrogenase / sirohydrochlorin ferrochelatase family. In the C-terminal section; belongs to the precorrin methyltransferase family.

The catalysed reaction is uroporphyrinogen III + 2 S-adenosyl-L-methionine = precorrin-2 + 2 S-adenosyl-L-homocysteine + H(+). It catalyses the reaction precorrin-2 + NAD(+) = sirohydrochlorin + NADH + 2 H(+). It carries out the reaction siroheme + 2 H(+) = sirohydrochlorin + Fe(2+). It participates in cofactor biosynthesis; adenosylcobalamin biosynthesis; precorrin-2 from uroporphyrinogen III: step 1/1. Its pathway is cofactor biosynthesis; adenosylcobalamin biosynthesis; sirohydrochlorin from precorrin-2: step 1/1. The protein operates within porphyrin-containing compound metabolism; siroheme biosynthesis; precorrin-2 from uroporphyrinogen III: step 1/1. It functions in the pathway porphyrin-containing compound metabolism; siroheme biosynthesis; siroheme from sirohydrochlorin: step 1/1. It participates in porphyrin-containing compound metabolism; siroheme biosynthesis; sirohydrochlorin from precorrin-2: step 1/1. Functionally, multifunctional enzyme that catalyzes the SAM-dependent methylations of uroporphyrinogen III at position C-2 and C-7 to form precorrin-2 via precorrin-1. Then it catalyzes the NAD-dependent ring dehydrogenation of precorrin-2 to yield sirohydrochlorin. Finally, it catalyzes the ferrochelation of sirohydrochlorin to yield siroheme. The protein is Siroheme synthase 1 of Pectobacterium atrosepticum (strain SCRI 1043 / ATCC BAA-672) (Erwinia carotovora subsp. atroseptica).